The following is a 433-amino-acid chain: 3-phosphoshikimate 1-carboxyvinyltransferase (433 aa).

Lysine 21, serine 22, and arginine 26 together coordinate 3-phosphoshikimate. Phosphoenolpyruvate is bound at residue lysine 21. Phosphoenolpyruvate is bound by residues glycine 96 and arginine 124. Serine 167, serine 168, glutamine 169, serine 195, aspartate 310, and lysine 337 together coordinate 3-phosphoshikimate. Residue glutamine 169 coordinates phosphoenolpyruvate. The Proton acceptor role is filled by aspartate 310. Phosphoenolpyruvate-binding residues include arginine 341, arginine 384, and lysine 410.

This sequence belongs to the EPSP synthase family. Monomer.

It localises to the cytoplasm. The enzyme catalyses 3-phosphoshikimate + phosphoenolpyruvate = 5-O-(1-carboxyvinyl)-3-phosphoshikimate + phosphate. It participates in metabolic intermediate biosynthesis; chorismate biosynthesis; chorismate from D-erythrose 4-phosphate and phosphoenolpyruvate: step 6/7. In terms of biological role, catalyzes the transfer of the enolpyruvyl moiety of phosphoenolpyruvate (PEP) to the 5-hydroxyl of shikimate-3-phosphate (S3P) to produce enolpyruvyl shikimate-3-phosphate and inorganic phosphate. This Clostridium botulinum (strain Alaska E43 / Type E3) protein is 3-phosphoshikimate 1-carboxyvinyltransferase.